A 468-amino-acid polypeptide reads, in one-letter code: Cysteine--tRNA ligase (468 aa).

Cys-33 contributes to the Zn(2+) binding site. The 'HIGH' region signature appears at 35-45; that stretch reads ATVQGLPHIGH. 3 residues coordinate Zn(2+): Cys-211, His-236, and Glu-240. The short motif at 267–271 is the 'KMSKS' region element; that stretch reads KMSKS. Lys-270 lines the ATP pocket.

This sequence belongs to the class-I aminoacyl-tRNA synthetase family. Monomer. Zn(2+) serves as cofactor.

The protein localises to the cytoplasm. The catalysed reaction is tRNA(Cys) + L-cysteine + ATP = L-cysteinyl-tRNA(Cys) + AMP + diphosphate. In Mycobacterium marinum (strain ATCC BAA-535 / M), this protein is Cysteine--tRNA ligase.